A 114-amino-acid chain; its full sequence is Hydrogenase maturation factor HypA (114 aa).

His2 contributes to the Ni(2+) binding site. 4 residues coordinate Zn(2+): Cys73, Cys76, Cys90, and Cys93.

The protein belongs to the HypA/HybF family.

Functionally, involved in the maturation of [NiFe] hydrogenases. Required for nickel insertion into the metal center of the hydrogenase. The protein is Hydrogenase maturation factor HypA of Klebsiella pneumoniae (strain 342).